The sequence spans 384 residues: Interstitial collagenase (384 aa).

A signal peptide spans 1–25; it reads MLSGLWSSILALLGVFLQSVGEFRA. A propeptide spans 26 to 88 (activation peptide); that stretch reads ETQEQDVEIV…STCGVPDVGE (63 aa). A Cysteine switch motif is present at residues 79 to 86; that stretch reads STCGVPDV. C81 serves as a coordination point for Zn(2+). D113 and D129 together coordinate Ca(2+). Positions 139 and 141 each coordinate Zn(2+). Residues D146, G147, G149, and N151 each contribute to the Ca(2+) site. H154 contacts Zn(2+). Residues G161, G163, and D165 each contribute to the Ca(2+) site. H167 serves as a coordination point for Zn(2+). Residues D169, E170, and E172 each contribute to the Ca(2+) site. H189 contributes to the Zn(2+) binding site. E190 is a catalytic residue. Zn(2+)-binding residues include H193 and H199. The segment at 218-239 is disordered; it reads LSQDDIDGPSGNPVQPRGPQTP. Cysteines 242 and 381 form a disulfide. Ca(2+)-binding residues include D249, Q277, and D347. Hemopexin repeat units lie at residues 273–319 and 333–381; these read ELGL…FGFP and KQSM…WFNC.

This sequence belongs to the peptidase M10A family. The cofactor is Ca(2+). It depends on Zn(2+) as a cofactor.

It is found in the secreted. It localises to the extracellular space. The protein localises to the extracellular matrix. It carries out the reaction Cleavage of the triple helix of collagen at about three-quarters of the length of the molecule from the N-terminus, at 775-Gly-|-Ile-776 in the alpha1(I) chain. Cleaves synthetic substrates and alpha-macroglobulins at bonds where P1' is a hydrophobic residue.. Can be activated without removal of the activation peptide. In terms of biological role, cleaves collagens of types I, II, and III at one site in the helical domain. Also cleaves collagens of types VII and X. This Aquarana catesbeiana (American bullfrog) protein is Interstitial collagenase.